We begin with the raw amino-acid sequence, 243 residues long: Small ribosomal subunit protein eS4 (243 aa).

In terms of domain architecture, S4 RNA-binding spans 43–105; sequence IPLIYIVRDY…TGEHYRVLPN (63 aa).

The protein belongs to the eukaryotic ribosomal protein eS4 family. In terms of assembly, part of the 30S ribosomal subunit.

The chain is Small ribosomal subunit protein eS4 from Thermococcus kodakarensis (strain ATCC BAA-918 / JCM 12380 / KOD1) (Pyrococcus kodakaraensis (strain KOD1)).